Here is a 579-residue protein sequence, read N- to C-terminus: Probable serine/threonine-protein kinase kinY (579 aa).

Residues 1-24 form a disordered region; the sequence is MINGEQTMVEDELPDQGKPMSDES. One can recognise a Protein kinase domain in the interval 32 to 309; it reads LKVGESIGSG…HVLKQLTSLF (278 aa). ATP-binding positions include 38–46 and Lys59; that span reads IGSGAYGIV. The Proton acceptor role is filled by Asp167.

Belongs to the protein kinase superfamily. TKL Ser/Thr protein kinase family.

It catalyses the reaction L-seryl-[protein] + ATP = O-phospho-L-seryl-[protein] + ADP + H(+). The enzyme catalyses L-threonyl-[protein] + ATP = O-phospho-L-threonyl-[protein] + ADP + H(+). The sequence is that of Probable serine/threonine-protein kinase kinY (kinY) from Dictyostelium discoideum (Social amoeba).